The sequence spans 494 residues: Alanine--glyoxylate aminotransferase 2-like (494 aa).

Position 291 is an N6-(pyridoxal phosphate)lysine (Lys291).

The protein belongs to the class-III pyridoxal-phosphate-dependent aminotransferase family. Pyridoxal 5'-phosphate is required as a cofactor.

The sequence is that of Alanine--glyoxylate aminotransferase 2-like from Drosophila melanogaster (Fruit fly).